The sequence spans 286 residues: Bifunctional protein FolD (286 aa).

Residues 165–167 and Ser190 contribute to the NADP(+) site; that span reads GRS.

The protein belongs to the tetrahydrofolate dehydrogenase/cyclohydrolase family. In terms of assembly, homodimer.

It catalyses the reaction (6R)-5,10-methylene-5,6,7,8-tetrahydrofolate + NADP(+) = (6R)-5,10-methenyltetrahydrofolate + NADPH. The enzyme catalyses (6R)-5,10-methenyltetrahydrofolate + H2O = (6R)-10-formyltetrahydrofolate + H(+). It functions in the pathway one-carbon metabolism; tetrahydrofolate interconversion. Functionally, catalyzes the oxidation of 5,10-methylenetetrahydrofolate to 5,10-methenyltetrahydrofolate and then the hydrolysis of 5,10-methenyltetrahydrofolate to 10-formyltetrahydrofolate. This chain is Bifunctional protein FolD, found in Burkholderia lata (strain ATCC 17760 / DSM 23089 / LMG 22485 / NCIMB 9086 / R18194 / 383).